We begin with the raw amino-acid sequence, 770 residues long: Signal transducer and activator of transcription 3 (770 aa).

Position 2 is an N-acetylalanine (A2). K49 and K87 each carry N6-acetyllysine. Residues 150–162 (DVRKRVQDLEQKM) carry the Essential for nuclear import motif. Residues 580 to 670 (WNEGYIMGFI…DATNILVSPL (91 aa)) form the SH2 domain. An allysine; alternate mark is found at K601, K615, and K631. An N6-acetyllysine; alternate mark is found at K601, K615, and K631. Phosphotyrosine; by TYK2 is present on Y640. K685 bears the Allysine; alternate mark. K685 carries the post-translational modification N6-acetyllysine; alternate. Residue P704 is modified to Phosphotyrosine. Y705 carries the phosphotyrosine; by FER and PTK6 modification. Residue K707 is modified to N6-acetyllysine. Phosphothreonine is present on T714. Residue S727 is modified to Phosphoserine; by DYRK2, NLK, NEK6, IRAK1, RPS6KA5, ZIPK/DAPK3 and PKC/PRKCE.

The protein belongs to the transcription factor STAT family. Forms a homodimer or a heterodimer with a related family member (at least STAT1). Component of a promoter-binding complex composed of STAT3, NFATC3 and NFATC4; complex formation is enhanced by calcineurin. Interacts with IL31RA, NCOA1, PELP1, SIPAR, SOCS7, STATIP1 and TMF1. Interacts with IL23R in presence of IL23. Interacts (via SH2 domain) with NLK. Interacts with ARL2BP; the interaction is enhanced by LIF and JAK1 expression. Interacts with KPNA4 and KPNA5; KPNA4 may be the primary mediator of nuclear import. Interacts with CAV2; the interaction is increased on insulin-induced tyrosine phosphorylation of CAV2 and leads to STAT3 activation. Interacts with ARL2BP; interaction is enhanced with ARL2. Interacts with NEK6. Binds to CDK9 when activated and nuclear. Interacts with BMX. Interacts with ZIPK/DAPK3. Interacts with PIAS3; the interaction occurs on stimulation by IL6, CNTF or OSM and inhibits the DNA binding activity of STAT3. In prostate cancer cells, interacts with PRKCE and promotes DNA binding activity of STAT3. Interacts with STMN3, antagonizing its microtubule-destabilizing activity. Interacts with the 'Lys-129' acetylated form of BIRC5/survivin. Interacts with FER. Interacts (via SH2 domain) with EIF2AK2/PKR (via the kinase catalytic domain). Interacts with INPP5F; the interaction is independent of STAT3 Tyr-705 phosphorylation status. Interacts with FGFR4. Interacts with OCIAD1. Interacts with OCIAD2. Interacts (unphosphorylated or phosphorylated at Ser-727) with PHB1. Interacts and may form heterodimers with NHLH1. Found in a complex with SLC39A6, SLC39A10 and with the 'Ser-727' phosphorylated form of STAT3 throughout mitosis. Interacts (when phosphorylated at Tyr-705) with CD274/PD-L1; promoting nuclear translocation of CD274/PD-L1. Interacts (when acetylated) with EP300 (via bromo domain); interaction takes place following STAT3 acetylation by EP300 and promotes enhanceosome assembly. Interacts (when acetylated) with BRD2 (via bromo domain); interaction promotes STAT3 recruitment to chromatin and T-helper Th17 cell differentiation. Interacts with FAM220A/SIPAR; the interaction occurs in both the nucleus and the cytoplasm, is enhanced by IL6 and promotes STAT3 dephosphorylation. Interacts in both unphosphorylated and phosphorylated forms with FAM220A but interacts preferentially in the phosphorylated form in the nucleus. Interacts with PTPN2; the interaction is promoted by FAM220A and leads to STAT3 dephosphorylation which negatively regulates STAT3 transcriptional activator activity. As to quaternary structure, (Microbial infection) Interacts with HCV core protein. In terms of assembly, (Microbial infection) Interacts with S.typhimurium SarA. (Microbial infection) Interacts with human cytomegalovirus (HHV-5) immediate early protein IE1; this interaction leads to STAT3 nuclear accumulation and disruption of IL6-induced STAT3 phosphorylation. In terms of processing, tyrosine phosphorylated upon stimulation with EGF. Tyrosine phosphorylated in response to constitutively activated FGFR1, FGFR2, FGFR3 and FGFR4. Activated through tyrosine phosphorylation by BMX. Tyrosine phosphorylated in response to IL6, IL11, LIF, CNTF, KITLG/SCF, CSF1, EGF, PDGF, IFN-alpha, LEP and OSM. Activated KIT promotes phosphorylation on tyrosine residues and subsequent translocation to the nucleus. Phosphorylated on serine upon DNA damage, probably by ATM or ATR. Serine phosphorylation is important for the formation of stable DNA-binding STAT3 homodimers and maximal transcriptional activity. ARL2BP may participate in keeping the phosphorylated state of STAT3 within the nucleus. Upon LPS challenge, phosphorylated within the nucleus by IRAK1. Upon erythropoietin treatment, phosphorylated on Ser-727 by RPS6KA5. Dephosphorylation on tyrosine residues by PTPN2 negatively regulates IL6/interleukin-6 signaling. Phosphorylation at Tyr-705 by PTK6, isoform M2 of PKM (PKM2) or FER leads to an increase of its transcriptional activity. Phosphorylation at Tyr-705 is increased in the presence of calcineurin. Phosphorylation at Tyr-640 by TYK2 negatively regulates transcriptional activity. Acetylated on lysine residues by EP300/p300, promoting its activation. Acetylation at Lys-49 and Lys-87 by EP300/p300 promotes its activation. Acetylation at Lys-87 by EP300/p300 promotes its association with BRD2 and recruitment to chromatin. Deacetylated at Lys-49 and Lys-87 by HDAC1. Acetylation at Lys-685 by EP300/p300 promotes its homodimerization and activation. Deacetylated at Lys-685 by HDAC3. Acetylated on lysine residues by CREBBP. Deacetylation by LOXL3 leads to disrupt STAT3 dimerization and inhibit STAT3 transcription activity. Oxidation of lysine residues to allysine on STAT3 preferentially takes place on lysine residues that are acetylated. Post-translationally, some lysine residues are oxidized to allysine by LOXL3, leading to disrupt STAT3 dimerization and inhibit STAT3 transcription activity. Oxidation of lysine residues to allysine on STAT3 preferentially takes place on lysine residues that are acetylated. In terms of processing, (Microbial infection) Phosphorylated on Tyr-705 in the presence of S.typhimurium SarA. Heart, brain, placenta, lung, liver, skeletal muscle, kidney and pancreas. Expressed in naive CD4(+) T cells as well as T-helper Th17, Th1 and Th2 cells.

It is found in the cytoplasm. The protein localises to the nucleus. Functionally, signal transducer and transcription activator that mediates cellular responses to interleukins, KITLG/SCF, LEP and other growth factors. Once activated, recruits coactivators, such as NCOA1 or MED1, to the promoter region of the target gene. May mediate cellular responses to activated FGFR1, FGFR2, FGFR3 and FGFR4. Upon activation of IL6ST/gp130 signaling by interleukin-6 (IL6), binds to the IL6-responsive elements identified in the promoters of various acute-phase protein genes. Activated by IL31 through IL31RA. Acts as a regulator of inflammatory response by regulating differentiation of naive CD4(+) T-cells into T-helper Th17 or regulatory T-cells (Treg): acetylation promotes its transcription activity and cell differentiation while deacetylation and oxidation of lysine residues by LOXL3 inhibits differentiation. Involved in cell cycle regulation by inducing the expression of key genes for the progression from G1 to S phase, such as CCND1. Mediates the effects of LEP on melanocortin production, body energy homeostasis and lactation. May play an apoptotic role by transctivating BIRC5 expression under LEP activation. Cytoplasmic STAT3 represses macroautophagy by inhibiting EIF2AK2/PKR activity. Plays a crucial role in basal beta cell functions, such as regulation of insulin secretion. Following JAK/STAT signaling activation and as part of a complex with NFATC3 and NFATC4, binds to the alpha-beta E4 promoter region of CRYAB and activates transcription in cardiomyocytes. This is Signal transducer and activator of transcription 3 from Homo sapiens (Human).